A 329-amino-acid polypeptide reads, in one-letter code: MSKPALRVAVTGAAGQIGYALLFRIASGEMLGKDQPVILQLLEIPDEKAQKALKGVIMELEDCAFPLLHEVTAHSDPRTAFKDADVALLVGARPRGPGMERKDLLSVNAQIFTAQGRALNDVASRNVKVLVVGNPANTNAYIAMKSAPDLPAKNFTAMLRLDHNRALSQLSAKSGKRVADIEKLIVWGNHSPTMYPDFRFATVGGQGLTQLINDDAWNRDTFIPTVGKRGAAIIEARGLSSAASAANAAIDHVRDWVLGSNGKWVTMGIPSDGSYGIPEGIIYGFPVVTENGEYKMIKDLEIDAFSRERLDFTLKELLEERDGVKDLLK.

Position 12–18 (12–18) interacts with NAD(+); that stretch reads GAAGQIG. Residues R95 and R101 each coordinate substrate. NAD(+) is bound by residues N108, Q115, and 132-134; that span reads VGN. N134 and R165 together coordinate substrate. The active-site Proton acceptor is the H190.

The protein belongs to the LDH/MDH superfamily. MDH type 2 family.

The catalysed reaction is (S)-malate + NAD(+) = oxaloacetate + NADH + H(+). In terms of biological role, catalyzes the reversible oxidation of malate to oxaloacetate. This Bordetella bronchiseptica (strain ATCC BAA-588 / NCTC 13252 / RB50) (Alcaligenes bronchisepticus) protein is Malate dehydrogenase.